The sequence spans 79 residues: ATP synthase subunit c (79 aa).

2 helical membrane-spanning segments follow: residues 11 to 31 (ISAA…IGIL) and 55 to 75 (IVMG…LYLI).

This sequence belongs to the ATPase C chain family. In terms of assembly, F-type ATPases have 2 components, F(1) - the catalytic core - and F(0) - the membrane proton channel. F(1) has five subunits: alpha(3), beta(3), gamma(1), delta(1), epsilon(1). F(0) has three main subunits: a(1), b(2) and c(10-14). The alpha and beta chains form an alternating ring which encloses part of the gamma chain. F(1) is attached to F(0) by a central stalk formed by the gamma and epsilon chains, while a peripheral stalk is formed by the delta and b chains.

Its subcellular location is the cell membrane. In terms of biological role, f(1)F(0) ATP synthase produces ATP from ADP in the presence of a proton or sodium gradient. F-type ATPases consist of two structural domains, F(1) containing the extramembraneous catalytic core and F(0) containing the membrane proton channel, linked together by a central stalk and a peripheral stalk. During catalysis, ATP synthesis in the catalytic domain of F(1) is coupled via a rotary mechanism of the central stalk subunits to proton translocation. Key component of the F(0) channel; it plays a direct role in translocation across the membrane. A homomeric c-ring of between 10-14 subunits forms the central stalk rotor element with the F(1) delta and epsilon subunits. The sequence is that of ATP synthase subunit c from Wigglesworthia glossinidia brevipalpis.